The primary structure comprises 579 residues: uncharacterized protein (579 aa).

A run of 11 helical transmembrane segments spans residues Asp13–Ile35, Ser39–Asn61, Ala66–Phe83, Ala93–Leu110, Leu130–Leu152, Ile162–Ile181, Leu201–Ala223, Tyr238–Leu257, Gly264–Thr286, Ile296–Met315, and Leu324–Ala346.

The protein localises to the cell membrane. This is an uncharacterized protein from Pasteurella multocida (strain Pm70).